A 27-amino-acid polypeptide reads, in one-letter code: Pyruvate dehydrogenase protein X component, mitochondrial (27 aa).

Residues Phe-1 to Arg-27 are disordered. Residues Arg-2–Arg-27 enclose the Peripheral subunit-binding (PSBD) domain. N6-acetyllysine is present on Lys-13. Phosphoserine is present on Ser-15. Over residues Asp-17–Arg-27 the composition is skewed to polar residues.

This sequence belongs to the 2-oxoacid dehydrogenase family. In terms of assembly, part of the inner core of the multimeric pyruvate dehydrogenase complex that is composed of about 48 DLAT and 12 PDHX molecules. This core binds multiple copies of pyruvate dehydrogenase (subunits PDH1A and PDHB, E1), dihydrolipoamide acetyltransferase (DLAT, E2) and lipoamide dehydrogenase (DLD, E3). Interacts with SIRT4. Interacts with DLD.

The protein localises to the mitochondrion matrix. Its function is as follows. Required for anchoring dihydrolipoamide dehydrogenase (E3) to the dihydrolipoamide transacetylase (E2) core of the pyruvate dehydrogenase complexes of eukaryotes. This specific binding is essential for a functional PDH complex. This Mesocricetus auratus (Golden hamster) protein is Pyruvate dehydrogenase protein X component, mitochondrial.